A 322-amino-acid chain; its full sequence is 4-hydroxy-3-methylbut-2-enyl diphosphate reductase (322 aa).

Cys15 is a [4Fe-4S] cluster binding site. (2E)-4-hydroxy-3-methylbut-2-enyl diphosphate contacts are provided by His44 and His77. Residues His44 and His77 each contribute to the dimethylallyl diphosphate site. His44 and His77 together coordinate isopentenyl diphosphate. Residue Cys99 participates in [4Fe-4S] cluster binding. His127 provides a ligand contact to (2E)-4-hydroxy-3-methylbut-2-enyl diphosphate. His127 contributes to the dimethylallyl diphosphate binding site. Residue His127 coordinates isopentenyl diphosphate. The Proton donor role is filled by Glu129. Thr168 lines the (2E)-4-hydroxy-3-methylbut-2-enyl diphosphate pocket. Position 198 (Cys198) interacts with [4Fe-4S] cluster. The (2E)-4-hydroxy-3-methylbut-2-enyl diphosphate site is built by Ser226, Ser227, Asn228, and Ser270. Ser226, Ser227, Asn228, and Ser270 together coordinate dimethylallyl diphosphate. Residues Ser226, Ser227, Asn228, and Ser270 each coordinate isopentenyl diphosphate.

The protein belongs to the IspH family. [4Fe-4S] cluster is required as a cofactor.

The enzyme catalyses isopentenyl diphosphate + 2 oxidized [2Fe-2S]-[ferredoxin] + H2O = (2E)-4-hydroxy-3-methylbut-2-enyl diphosphate + 2 reduced [2Fe-2S]-[ferredoxin] + 2 H(+). It catalyses the reaction dimethylallyl diphosphate + 2 oxidized [2Fe-2S]-[ferredoxin] + H2O = (2E)-4-hydroxy-3-methylbut-2-enyl diphosphate + 2 reduced [2Fe-2S]-[ferredoxin] + 2 H(+). The protein operates within isoprenoid biosynthesis; dimethylallyl diphosphate biosynthesis; dimethylallyl diphosphate from (2E)-4-hydroxy-3-methylbutenyl diphosphate: step 1/1. Its pathway is isoprenoid biosynthesis; isopentenyl diphosphate biosynthesis via DXP pathway; isopentenyl diphosphate from 1-deoxy-D-xylulose 5-phosphate: step 6/6. Catalyzes the conversion of 1-hydroxy-2-methyl-2-(E)-butenyl 4-diphosphate (HMBPP) into a mixture of isopentenyl diphosphate (IPP) and dimethylallyl diphosphate (DMAPP). Acts in the terminal step of the DOXP/MEP pathway for isoprenoid precursor biosynthesis. The chain is 4-hydroxy-3-methylbut-2-enyl diphosphate reductase from Neisseria gonorrhoeae (strain ATCC 700825 / FA 1090).